We begin with the raw amino-acid sequence, 331 residues long: tRNA N6-adenosine threonylcarbamoyltransferase (331 aa).

The Fe cation site is built by His109, His113, and Tyr130. Residues 130–134, Asp162, Asp183, and Ser262 each bind substrate; that span reads YLSGG. Residue Asp290 coordinates Fe cation.

The protein belongs to the KAE1 / TsaD family. Requires Fe(2+) as cofactor.

It localises to the cytoplasm. The enzyme catalyses L-threonylcarbamoyladenylate + adenosine(37) in tRNA = N(6)-L-threonylcarbamoyladenosine(37) in tRNA + AMP + H(+). Its function is as follows. Required for the formation of a threonylcarbamoyl group on adenosine at position 37 (t(6)A37) in tRNAs that read codons beginning with adenine. Is probably involved in the transfer of the threonylcarbamoyl moiety of threonylcarbamoyl-AMP (TC-AMP) to the N6 group of A37. This chain is tRNA N6-adenosine threonylcarbamoyltransferase, found in Saccharolobus islandicus (strain Y.G.57.14 / Yellowstone #1) (Sulfolobus islandicus).